Reading from the N-terminus, the 261-residue chain is Ribosomal RNA small subunit methyltransferase J (261 aa).

Residues 109-110 (RD), 125-126 (ER), and Asp179 contribute to the S-adenosyl-L-methionine site.

This sequence belongs to the methyltransferase superfamily. RsmJ family.

The protein localises to the cytoplasm. It carries out the reaction guanosine(1516) in 16S rRNA + S-adenosyl-L-methionine = N(2)-methylguanosine(1516) in 16S rRNA + S-adenosyl-L-homocysteine + H(+). Functionally, specifically methylates the guanosine in position 1516 of 16S rRNA. This is Ribosomal RNA small subunit methyltransferase J from Pseudomonas paraeruginosa (strain DSM 24068 / PA7) (Pseudomonas aeruginosa (strain PA7)).